A 336-amino-acid polypeptide reads, in one-letter code: Anthranilate phosphoribosyltransferase (336 aa).

5-phospho-alpha-D-ribose 1-diphosphate is bound by residues Gly79, 82–83 (GD), Thr87, 89–92 (NISS), 107–115 (KHGNRSVSS), and Ser119. Residue Gly79 participates in anthranilate binding. Mg(2+) is bound at residue Ser91. Position 110 (Asn110) interacts with anthranilate. An anthranilate-binding site is contributed by Arg165. Mg(2+) is bound by residues Asp223 and Glu224.

This sequence belongs to the anthranilate phosphoribosyltransferase family. Homodimer. The cofactor is Mg(2+).

The enzyme catalyses N-(5-phospho-beta-D-ribosyl)anthranilate + diphosphate = 5-phospho-alpha-D-ribose 1-diphosphate + anthranilate. It participates in amino-acid biosynthesis; L-tryptophan biosynthesis; L-tryptophan from chorismate: step 2/5. Its function is as follows. Catalyzes the transfer of the phosphoribosyl group of 5-phosphorylribose-1-pyrophosphate (PRPP) to anthranilate to yield N-(5'-phosphoribosyl)-anthranilate (PRA). This Tolumonas auensis (strain DSM 9187 / NBRC 110442 / TA 4) protein is Anthranilate phosphoribosyltransferase.